The primary structure comprises 227 residues: Holliday junction branch migration complex subunit RuvA (227 aa).

The interval 1–64 (MFESISGILT…EDALRLFGFS (64 aa)) is domain I. The segment at 65-143 (NVQERTLFLS…LTDAASCAQS (79 aa)) is domain II. Positions 144–158 (QTDDRAAHPSNLGCA) are flexible linker. Residues 159–227 (PHAREIEDLV…HPHAVAPAAE (69 aa)) are domain III.

It belongs to the RuvA family. In terms of assembly, homotetramer. Forms an RuvA(8)-RuvB(12)-Holliday junction (HJ) complex. HJ DNA is sandwiched between 2 RuvA tetramers; dsDNA enters through RuvA and exits via RuvB. An RuvB hexamer assembles on each DNA strand where it exits the tetramer. Each RuvB hexamer is contacted by two RuvA subunits (via domain III) on 2 adjacent RuvB subunits; this complex drives branch migration. In the full resolvosome a probable DNA-RuvA(4)-RuvB(12)-RuvC(2) complex forms which resolves the HJ.

Its subcellular location is the cytoplasm. The RuvA-RuvB-RuvC complex processes Holliday junction (HJ) DNA during genetic recombination and DNA repair, while the RuvA-RuvB complex plays an important role in the rescue of blocked DNA replication forks via replication fork reversal (RFR). RuvA specifically binds to HJ cruciform DNA, conferring on it an open structure. The RuvB hexamer acts as an ATP-dependent pump, pulling dsDNA into and through the RuvAB complex. HJ branch migration allows RuvC to scan DNA until it finds its consensus sequence, where it cleaves and resolves the cruciform DNA. The sequence is that of Holliday junction branch migration complex subunit RuvA from Treponema pallidum (strain Nichols).